We begin with the raw amino-acid sequence, 311 residues long: Catechol 1,2-dioxygenase 1 (311 aa).

Residues Tyr164, Tyr200, His224, and His226 each coordinate Fe cation.

It belongs to the intradiol ring-cleavage dioxygenase family. Homodimer. Requires Fe(3+) as cofactor.

It carries out the reaction catechol + O2 = cis,cis-muconate + 2 H(+). Its pathway is aromatic compound metabolism; beta-ketoadipate pathway; 5-oxo-4,5-dihydro-2-furylacetate from catechol: step 1/3. Can cleave 4-methyl-, 4-chloro-, and 3-methoxycatechol at lower rates than catechol, but has no activity with 4-nitrocatechol or protocatechuic acid. The chain is Catechol 1,2-dioxygenase 1 (catA1) from Acinetobacter lwoffii.